Reading from the N-terminus, the 529-residue chain is Putative inorganic phosphate cotransporter (529 aa).

8 consecutive transmembrane segments (helical) span residues F37–M57, Y110–A130, V148–V168, A202–A222, S232–V252, L338–I358, F429–A449, and I466–G486. Residues N495–S529 are disordered. Over residues A504–S529 the composition is skewed to polar residues.

Belongs to the major facilitator superfamily. Sodium/anion cotransporter family.

The protein resides in the membrane. Its function is as follows. May be an inorganic phosphate cotransporter. In Drosophila melanogaster (Fruit fly), this protein is Putative inorganic phosphate cotransporter (Picot).